Consider the following 161-residue polypeptide: Nucleotide-binding protein XCV3791 (161 aa).

The protein belongs to the YajQ family.

Its function is as follows. Nucleotide-binding protein. The chain is Nucleotide-binding protein XCV3791 from Xanthomonas euvesicatoria pv. vesicatoria (strain 85-10) (Xanthomonas campestris pv. vesicatoria).